Here is a 167-residue protein sequence, read N- to C-terminus: UPF0598 protein CG30010 (167 aa).

This sequence belongs to the UPF0598 family.

The sequence is that of UPF0598 protein CG30010 from Drosophila melanogaster (Fruit fly).